A 99-amino-acid polypeptide reads, in one-letter code: Nucleoid-associated protein LACR_0106 (99 aa).

This sequence belongs to the YbaB/EbfC family. As to quaternary structure, homodimer.

The protein resides in the cytoplasm. It is found in the nucleoid. Binds to DNA and alters its conformation. May be involved in regulation of gene expression, nucleoid organization and DNA protection. In Lactococcus lactis subsp. cremoris (strain SK11), this protein is Nucleoid-associated protein LACR_0106.